Reading from the N-terminus, the 375-residue chain is Succinyl-diaminopimelate desuccinylase (375 aa).

His66 is a Zn(2+) binding site. The active site involves Asp68. Asp99 is a Zn(2+) binding site. Glu133 functions as the Proton acceptor in the catalytic mechanism. Zn(2+) is bound by residues Glu134, Glu162, and His348.

Belongs to the peptidase M20A family. DapE subfamily. In terms of assembly, homodimer. Zn(2+) serves as cofactor. Co(2+) is required as a cofactor.

The enzyme catalyses N-succinyl-(2S,6S)-2,6-diaminopimelate + H2O = (2S,6S)-2,6-diaminopimelate + succinate. Its pathway is amino-acid biosynthesis; L-lysine biosynthesis via DAP pathway; LL-2,6-diaminopimelate from (S)-tetrahydrodipicolinate (succinylase route): step 3/3. In terms of biological role, catalyzes the hydrolysis of N-succinyl-L,L-diaminopimelic acid (SDAP), forming succinate and LL-2,6-diaminopimelate (DAP), an intermediate involved in the bacterial biosynthesis of lysine and meso-diaminopimelic acid, an essential component of bacterial cell walls. The protein is Succinyl-diaminopimelate desuccinylase of Klebsiella pneumoniae subsp. pneumoniae (strain ATCC 700721 / MGH 78578).